The following is a 112-amino-acid chain: MENRFEISMLIDYYGTLLTEKQFNVMTLYYNEDLSLAEIAEINKTSRQAIYDLIKRCSKQLHSYDEKLKLSKKVDKRYRIKEELMAELNKNSNLDEDIKKYIDEKLEEIINA.

This sequence belongs to the UPF0122 family.

Might take part in the signal recognition particle (SRP) pathway. This is inferred from the conservation of its genetic proximity to ftsY/ffh. May be a regulatory protein. In Clostridium perfringens (strain SM101 / Type A), this protein is UPF0122 protein CPR_1686.